The following is a 398-amino-acid chain: S-adenosylmethionine synthase (398 aa).

His-16 lines the ATP pocket. A Mg(2+)-binding site is contributed by Asp-18. Glu-51 contributes to the K(+) binding site. L-methionine-binding residues include Glu-64 and Gln-108. A flexible loop region spans residues 108 to 118 (QSADIAQGVDA). ATP is bound by residues 176–178 (DSK), 242–243 (KF), Asp-251, 257–258 (RK), Ala-274, and Lys-278. Asp-251 lines the L-methionine pocket. Lys-282 provides a ligand contact to L-methionine.

It belongs to the AdoMet synthase family. In terms of assembly, homotetramer; dimer of dimers. It depends on Mg(2+) as a cofactor. K(+) is required as a cofactor.

The protein localises to the cytoplasm. The enzyme catalyses L-methionine + ATP + H2O = S-adenosyl-L-methionine + phosphate + diphosphate. The protein operates within amino-acid biosynthesis; S-adenosyl-L-methionine biosynthesis; S-adenosyl-L-methionine from L-methionine: step 1/1. In terms of biological role, catalyzes the formation of S-adenosylmethionine (AdoMet) from methionine and ATP. The overall synthetic reaction is composed of two sequential steps, AdoMet formation and the subsequent tripolyphosphate hydrolysis which occurs prior to release of AdoMet from the enzyme. The polypeptide is S-adenosylmethionine synthase (Nitrobacter hamburgensis (strain DSM 10229 / NCIMB 13809 / X14)).